Consider the following 261-residue polypeptide: 5'-nucleotidase SurE (261 aa).

Positions 12, 13, 43, and 100 each coordinate a divalent metal cation.

Belongs to the SurE nucleotidase family. The cofactor is a divalent metal cation.

The protein localises to the cytoplasm. It catalyses the reaction a ribonucleoside 5'-phosphate + H2O = a ribonucleoside + phosphate. Its function is as follows. Nucleotidase that shows phosphatase activity on nucleoside 5'-monophosphates. The protein is 5'-nucleotidase SurE of Protochlamydia amoebophila (strain UWE25).